The primary structure comprises 301 residues: MQIFIGKIPNHVSEEQIKEYFGQFGEVTDVSLKGTYGFLNFDSEGSITRVLNQRTHSIDGAPISVERANGRKRPLDGEYHDRYMDMGRGGYSPHRDYRGFRNAPYPPMRYESRSPGRYDPRFSDRYGGRSPEYRGDSFRMGDPQRSRDFCEYCNACPIHGMRDMMDSRKRHHMSRDHPNNHLKVVFENIAPNTAIEDFKNFVQDHGFEPSYARLGYSGNHAVFEFKNIEDKDNAMKKLDGAEFNGHILKTRSYLSKDEYKSRERESHMRSELQPTDNGEAEPQGTTTDIYEGIEDAKAEND.

Residues 1 to 70 enclose the RRM 1 domain; it reads MQIFIGKIPN…APISVERANG (70 aa). Disordered stretches follow at residues 106–140 and 255–301; these read PPMR…SFRM and SKDE…AEND. 2 stretches are compositionally biased toward basic and acidic residues: residues 110–140 and 255–270; these read YESR…SFRM and SKDE…HMRS. The RRM 2 domain occupies 182–255; it reads LKVVFENIAP…HILKTRSYLS (74 aa).

Belongs to the splicing factor SR family.

It is found in the nucleus. In terms of biological role, plays a role in splicing. This Encephalitozoon cuniculi (strain GB-M1) (Microsporidian parasite) protein is Probable splicing factor ECU05_1440.